A 177-amino-acid chain; its full sequence is Adenine phosphoribosyltransferase (177 aa).

It belongs to the purine/pyrimidine phosphoribosyltransferase family. As to quaternary structure, homodimer.

Its subcellular location is the cytoplasm. It catalyses the reaction AMP + diphosphate = 5-phospho-alpha-D-ribose 1-diphosphate + adenine. Its pathway is purine metabolism; AMP biosynthesis via salvage pathway; AMP from adenine: step 1/1. Catalyzes a salvage reaction resulting in the formation of AMP, that is energically less costly than de novo synthesis. The chain is Adenine phosphoribosyltransferase from Leptospira borgpetersenii serovar Hardjo-bovis (strain JB197).